The chain runs to 782 residues: Glucocorticoid receptor (782 aa).

A disordered region spans residues 1–20 (MDPKESLTPPSREEIPSSVL). Residues 1-425 (MDPKESLTPP…SAATGPPPKL (425 aa)) are modulating. T8 is subject to Phosphothreonine. R24 is modified (omega-N-methylarginine). S46 carries the post-translational modification Phosphoserine. Residues 48–79 (SLAAVSQPDSKQQRLAVDFPKGSGSNAQQPDL) are disordered. Phosphoserine is present on residues S114, S135, S142, S208, S216, and S231. The disordered stretch occupies residues 130-184 (LSRSTSVPENPKSSASAAGPAAPAEKAFPKTHSDGAPEQPNVKGQTGTNGGNVKL). Over residues 140–155 (PKSSASAAGPAAPAEK) the composition is skewed to low complexity. A Glycyl lysine isopeptide (Lys-Gly) (interchain with G-Cter in SUMO2) cross-link involves residue K263. Phosphoserine is present on S272. Glycyl lysine isopeptide (Lys-Gly) (interchain with G-Cter in SUMO); alternate cross-links involve residues K282 and K298. Residues K282 and K298 each participate in a glycyl lysine isopeptide (Lys-Gly) (interchain with G-Cter in SUMO2); alternate cross-link. A phosphoserine mark is found at S312 and S410. Residue K424 forms a Glycyl lysine isopeptide (Lys-Gly) (interchain with G-Cter in ubiquitin) linkage. 2 consecutive NR C4-type zinc fingers follow at residues 426-446 (CLVC…CGSC) and 462-486 (CAGR…YRKC). The nuclear receptor DNA-binding region spans 426-491 (CLVCSDEASG…RYRKCLQAGM (66 aa)). 4 positions are modified to N6-acetyllysine: K485, K497, K499, and K500. The segment at 490–782 (GMNLEARKTK…NIKKLLFHQK (293 aa)) is interaction with CLOCK. The tract at residues 492–528 (NLEARKTKKKIKGIQQATTGVSQETSENSANKTIVPA) is hinge. The region spanning 529 to 763 (TLPQLTPTLV…FPEMLAEIIT (235 aa)) is the NR LBD domain. The segment at 537–702 (LVSLLEVIEP…EIRMTYIKEL (166 aa)) is interaction with CRY1. A Glycyl lysine isopeptide (Lys-Gly) (interchain with G-Cter in SUMO) cross-link involves residue K708.

Belongs to the nuclear hormone receptor family. NR3 subfamily. In terms of assembly, heteromultimeric cytoplasmic complex with HSP90AA1, HSPA1A/HSPA1B, and FKBP5 or another immunophilin such as PPID, STIP1, or the immunophilin homolog PPP5C. Upon ligand binding FKBP5 dissociates from the complex and FKBP4 takes its place, thereby linking the complex to dynein and mediating transport to the nucleus, where the complex dissociates. Probably forms a complex composed of chaperones HSP90 and HSP70, co-chaperones CDC37, PPP5C, TSC1 and client protein TSC2, CDK4, AKT, RAF1 and NR3C1; this complex does not contain co-chaperones STIP1/HOP and PTGES3/p23. Directly interacts with UNC45A. Binds to DNA as a homodimer, and as heterodimer with NR3C2 or the retinoid X receptor. Binds STAT5A and STAT5B homodimers and heterodimers. Interacts with NRIP1, POU2F1, POU2F2 and TRIM28. Interacts with several coactivator complexes, including the SMARCA4 complex, CREBBP/EP300, TADA2L (Ada complex) and p160 coactivators such as NCOA2 and NCOA6. Interaction with BAG1 inhibits transactivation. Interacts with HEXIM1 and TGFB1I1. Interacts with NCOA1. Interacts with NCOA3, SMARCA4, SMARCC1, SMARCD1, and SMARCE1. Interacts with CLOCK, CRY1 and CRY2 in a ligand-dependent fashion. Interacts with CIART. Interacts with RWDD3. Interacts with UBE2I/UBC9 and this interaction is enhanced in the presence of RWDD3. Interacts with GRIP1. Interacts with NR4A3 (via nuclear receptor DNA-binding domain), represses transcription activity of NR4A3 on the POMC promoter Nur response element (NurRE). Directly interacts with PNRC2 to attract and form a complex with UPF1 and DCP1A; the interaction leads to rapid mRNA degradation. Interacts with GSK3B. Interacts with FNIP1 and FNIP2. Interacts (via C-terminus) with HNRNPU (via C-terminus). Interacts with MCM3AP. Interacts (via domain NR LBD) with HSP90AA1 and HSP90AB1. In the absence of hormonal ligand, interacts with TACC1. Interacts (via NR LBD domain) with ZNF764 (via KRAB domain); the interaction regulates transcription factor activity of NR3C1 by directing its actions toward certain biologic pathways. In terms of processing, acetylation by CLOCK reduces its binding to glucocorticoid response elements and its transcriptional activity. Post-translationally, increased proteasome-mediated degradation in response to glucocorticoids. Phosphorylated in the absence of hormone; becomes hyperphosphorylated in the presence of glucocorticoid. The Ser-208, Ser-231 and Ser-410-phosphorylated forms are mainly cytoplasmic, and the Ser-216-phosphorylated form is nuclear. Phosphorylation at Ser-216 increases transcriptional activity. Phosphorylation at Ser-208, Ser-231 and Ser-410 decreases signaling capacity. Phosphorylation at Ser-410 may protect from glucocorticoid-induced apoptosis. Phosphorylation at Ser-208 and Ser-216 is not required in regulation of chromosome segregation. May be dephosphorylated by PPP5C, attenuates NR3C1 action. In terms of processing, ubiquitinated by UBR5, leading to its degradation: UBR5 specifically recognizes and binds ligand-bound NR3C1 when it is not associated with coactivators (NCOAs). In presence of NCOAs, the UBR5-degron is not accessible, preventing its ubiquitination and degradation. Post-translationally, sumoylation at Lys-282 and Lys-298 negatively regulates its transcriptional activity. Sumoylation at Lys-708 positively regulates its transcriptional activity in the presence of RWDD3. Sumoylation at Lys-282 and Lys-298 is dispensable whereas sumoylation at Lys-708 is critical for the stimulatory effect of RWDD3 on its transcriptional activity. Heat shock increases sumoylation in a RWDD3-dependent manner.

It is found in the cytoplasm. Its subcellular location is the nucleus. The protein resides in the mitochondrion. It localises to the cytoskeleton. The protein localises to the spindle. It is found in the microtubule organizing center. Its subcellular location is the centrosome. The protein resides in the chromosome. It localises to the nucleoplasm. In terms of biological role, receptor for glucocorticoids (GC). Has a dual mode of action: as a transcription factor that binds to glucocorticoid response elements (GRE), both for nuclear and mitochondrial DNA, and as a modulator of other transcription factors. Affects inflammatory responses, cellular proliferation and differentiation in target tissues. Involved in chromatin remodeling. Plays a role in rapid mRNA degradation by binding to the 5' UTR of target mRNAs and interacting with PNRC2 in a ligand-dependent manner which recruits the RNA helicase UPF1 and the mRNA-decapping enzyme DCP1A, leading to RNA decay. Could act as a coactivator for STAT5-dependent transcription upon growth hormone (GH) stimulation and could reveal an essential role of hepatic GR in the control of body growth. Mediates glucocorticoid-induced apoptosis. Promotes accurate chromosome segregation during mitosis. May act as a tumor suppressor. May play a negative role in adipogenesis through the regulation of lipolytic and antilipogenic gene expression. The polypeptide is Glucocorticoid receptor (NR3C1) (Sus scrofa (Pig)).